We begin with the raw amino-acid sequence, 192 residues long: uncharacterized protein (192 aa).

The stretch at 53–111 (CLKESVERARKVYLSLLKDYERKSREYEKAYENYLKELRTYRETLYRIKEDLKFYERIC) forms a coiled coil.

This is an uncharacterized protein from Aquifex aeolicus (strain VF5).